A 1318-amino-acid polypeptide reads, in one-letter code: DNA-directed RNA polymerase subunit beta' (1318 aa).

Zn(2+)-binding residues include cysteine 60, cysteine 62, cysteine 75, and cysteine 78. Positions 535, 537, and 539 each coordinate Mg(2+). Zn(2+) contacts are provided by cysteine 890, cysteine 967, cysteine 974, and cysteine 977.

It belongs to the RNA polymerase beta' chain family. As to quaternary structure, the RNAP catalytic core consists of 2 alpha, 1 beta, 1 beta' and 1 omega subunit. When a sigma factor is associated with the core the holoenzyme is formed, which can initiate transcription. Mg(2+) serves as cofactor. It depends on Zn(2+) as a cofactor.

The catalysed reaction is RNA(n) + a ribonucleoside 5'-triphosphate = RNA(n+1) + diphosphate. In terms of biological role, DNA-dependent RNA polymerase catalyzes the transcription of DNA into RNA using the four ribonucleoside triphosphates as substrates. This is DNA-directed RNA polymerase subunit beta' from Rhodococcus erythropolis (strain PR4 / NBRC 100887).